We begin with the raw amino-acid sequence, 199 residues long: Thymidylate kinase (199 aa).

7 to 14 (GTEGVGKT) is an ATP binding site.

This sequence belongs to the thymidylate kinase family.

The enzyme catalyses dTMP + ATP = dTDP + ADP. Functionally, phosphorylation of dTMP to form dTDP in both de novo and salvage pathways of dTTP synthesis. This Acinetobacter baumannii (strain ATCC 17978 / DSM 105126 / CIP 53.77 / LMG 1025 / NCDC KC755 / 5377) protein is Thymidylate kinase.